Reading from the N-terminus, the 571-residue chain is Proline-rich protein 35 (571 aa).

Disordered stretches follow at residues 1-27 (MSRE…PHYI), 79-187 (GSTT…EGSV), 286-402 (APVS…GSPE), and 476-571 (GPQA…GAEV). The segment covering 16–26 (ARSRKPKKPHY) has biased composition (basic residues). Residues 165-175 (GMGGDPRGVGA) are compositionally biased toward gly residues. Residues 316-336 (TPRDPGQEGELERAAQSDPRR) are compositionally biased toward basic and acidic residues. The segment covering 351–367 (PSLTRFCSRSSLPTGSS) has biased composition (polar residues). Over residues 380–399 (PETPGPEGPLPLQPRGPVPG) the composition is skewed to pro residues.

This is Proline-rich protein 35 (PRR35) from Homo sapiens (Human).